The following is a 3131-amino-acid chain: Intermembrane lipid transfer protein vps1302 (3131 aa).

The region spanning 2 to 115 (LEGLLANFLN…VLESKRRQMQ (114 aa)) is the Chorein N-terminal domain. Basic and acidic residues predominate over residues 774–801 (DGKASDDDDNGDWRPESSESLDSHESEY). The disordered stretch occupies residues 774–807 (DGKASDDDDNGDWRPESSESLDSHESEYKLNNTP). In terms of domain architecture, SHR-BD spans 2085–2363 (KVMIYPPYVI…NYSWDFPILK (279 aa)).

This sequence belongs to the VPS13 family.

The protein localises to the golgi apparatus. It is found in the trans-Golgi network. Functionally, mediates the transfer of lipids between membranes at organelle contact sites. May play a role in mitochondrial lipid homeostasis, Golgi vesicle transport, reticulophagy, actin cytoskeleton organization and formation of the forespore membrane. This is Intermembrane lipid transfer protein vps1302 from Schizosaccharomyces pombe (strain 972 / ATCC 24843) (Fission yeast).